A 161-amino-acid polypeptide reads, in one-letter code: 2-C-methyl-D-erythritol 2,4-cyclodiphosphate synthase (161 aa).

A divalent metal cation-binding residues include aspartate 10 and histidine 12. Residues 10–12 (DVH) and 36–37 (HS) each bind 4-CDP-2-C-methyl-D-erythritol 2-phosphate. Histidine 44 is an a divalent metal cation binding site. 4-CDP-2-C-methyl-D-erythritol 2-phosphate-binding positions include 58 to 60 (DIG), 63 to 67 (FPDTD), 102 to 108 (AQAPKMA), 134 to 137 (TTTE), phenylalanine 141, and arginine 144.

The protein belongs to the IspF family. As to quaternary structure, homotrimer. Requires a divalent metal cation as cofactor.

The enzyme catalyses 4-CDP-2-C-methyl-D-erythritol 2-phosphate = 2-C-methyl-D-erythritol 2,4-cyclic diphosphate + CMP. The protein operates within isoprenoid biosynthesis; isopentenyl diphosphate biosynthesis via DXP pathway; isopentenyl diphosphate from 1-deoxy-D-xylulose 5-phosphate: step 4/6. Involved in the biosynthesis of isopentenyl diphosphate (IPP) and dimethylallyl diphosphate (DMAPP), two major building blocks of isoprenoid compounds. Catalyzes the conversion of 4-diphosphocytidyl-2-C-methyl-D-erythritol 2-phosphate (CDP-ME2P) to 2-C-methyl-D-erythritol 2,4-cyclodiphosphate (ME-CPP) with a corresponding release of cytidine 5-monophosphate (CMP). The sequence is that of 2-C-methyl-D-erythritol 2,4-cyclodiphosphate synthase from Shewanella sediminis (strain HAW-EB3).